We begin with the raw amino-acid sequence, 420 residues long: 3-isopropylmalate dehydratase large subunit (420 aa).

3 residues coordinate [4Fe-4S] cluster: Cys300, Cys360, and Cys363.

This sequence belongs to the aconitase/IPM isomerase family. LeuC type 2 subfamily. As to quaternary structure, heterodimer of LeuC and LeuD. Requires [4Fe-4S] cluster as cofactor.

It catalyses the reaction (2R,3S)-3-isopropylmalate = (2S)-2-isopropylmalate. It functions in the pathway amino-acid biosynthesis; L-leucine biosynthesis; L-leucine from 3-methyl-2-oxobutanoate: step 2/4. In terms of biological role, catalyzes the isomerization between 2-isopropylmalate and 3-isopropylmalate, via the formation of 2-isopropylmaleate. This chain is 3-isopropylmalate dehydratase large subunit, found in Halothermothrix orenii (strain H 168 / OCM 544 / DSM 9562).